Consider the following 541-residue polypeptide: Chaperonin GroEL (541 aa).

Residues 29 to 32, 86 to 90, G413, 477 to 479, and D493 each bind ATP; these read TLGP, DGTTT, and DAL.

The protein belongs to the chaperonin (HSP60) family. Forms a cylinder of 14 subunits composed of two heptameric rings stacked back-to-back. Interacts with the co-chaperonin GroES.

It is found in the cytoplasm. The enzyme catalyses ATP + H2O + a folded polypeptide = ADP + phosphate + an unfolded polypeptide.. Functionally, together with its co-chaperonin GroES, plays an essential role in assisting protein folding. The GroEL-GroES system forms a nano-cage that allows encapsulation of the non-native substrate proteins and provides a physical environment optimized to promote and accelerate protein folding. The sequence is that of Chaperonin GroEL from Clostridium botulinum (strain Loch Maree / Type A3).